Reading from the N-terminus, the 296-residue chain is UDP-N-acetylenolpyruvoylglucosamine reductase (296 aa).

One can recognise an FAD-binding PCMH-type domain in the interval 18–189 (LGGRALAEVR…TGADIVLRRG (172 aa)). Arg-166 is a catalytic residue. Cys-218 (proton donor) is an active-site residue. Residue Glu-289 is part of the active site.

This sequence belongs to the MurB family. The cofactor is FAD.

Its subcellular location is the cytoplasm. The catalysed reaction is UDP-N-acetyl-alpha-D-muramate + NADP(+) = UDP-N-acetyl-3-O-(1-carboxyvinyl)-alpha-D-glucosamine + NADPH + H(+). It participates in cell wall biogenesis; peptidoglycan biosynthesis. Cell wall formation. This Nitratidesulfovibrio vulgaris (strain ATCC 29579 / DSM 644 / CCUG 34227 / NCIMB 8303 / VKM B-1760 / Hildenborough) (Desulfovibrio vulgaris) protein is UDP-N-acetylenolpyruvoylglucosamine reductase.